We begin with the raw amino-acid sequence, 173 residues long: Histone deacetylase complex subunit SAP30 homolog (173 aa).

The segment at 21 to 69 (CCLLDDGDRCRNQAGNASYSKRIQKTVTQRRLKLSIDTAARHIYICDFH) adopts an Atypical zinc-finger fold.

The protein belongs to the SAP30 family. In terms of assembly, component of the class 1 Sin3-histone deacetylase complex (HDAC).

Its subcellular location is the nucleus. In terms of biological role, required for the function of the class 1 Sin3-histone deacetylase complex (HDAC). The sequence is that of Histone deacetylase complex subunit SAP30 homolog from Aedes aegypti (Yellowfever mosquito).